Consider the following 359-residue polypeptide: MRLPLLSFVIFALFALVFASGVVELQSLNELENTIRASKKGALIEFYATWCGHCKSLAPVYEELGALFEDHNDVLIGKIDADTHSDVADKYHITGFPTLIWFPPDGSEPVQYSNARDVDSLTQFVSEKTGIKKRKIVLPSNVVELDSLNFDKVVMDDKKDVLVEFYADWCGYCKRLAPTYETLGKVFKNEPNVEIVKINADVFADIGRLHEVASFPTIKFFPKDDKDKPELYEGDRSLESLIEYINKKSGTQRSPDGTLLSTAGRIPTFDEFAAEFLDMSNAAKEVVLEKVKQLALEDSSRWTKYYKKVFEKILNDENWVHKEAKRLSKLLRQKSIALASADDFKTRLNILNSFLPGNH.

The signal sequence occupies residues 1 to 19 (MRLPLLSFVIFALFALVFA). 2 consecutive Thioredoxin domains span residues 20-130 (SGVV…EKTG) and 134-250 (RKIV…KKSG). Catalysis depends on nucleophile residues Cys51 and Cys54. Cystine bridges form between Cys51–Cys54 and Cys170–Cys173.

The protein belongs to the protein disulfide isomerase family.

The catalysed reaction is Catalyzes the rearrangement of -S-S- bonds in proteins.. In terms of biological role, participates in the folding of proteins containing disulfide bonds, may be involved in glycosylation, prolyl hydroxylation and triglyceride transfer. In Schizosaccharomyces pombe (strain 972 / ATCC 24843) (Fission yeast), this protein is Protein disulfide-isomerase C17H9.14c.